A 949-amino-acid polypeptide reads, in one-letter code: Glycine dehydrogenase (decarboxylating) (949 aa).

Residue Lys-704 is modified to N6-(pyridoxal phosphate)lysine.

Belongs to the GcvP family. As to quaternary structure, the glycine cleavage system is composed of four proteins: P, T, L and H. Pyridoxal 5'-phosphate serves as cofactor.

The catalysed reaction is N(6)-[(R)-lipoyl]-L-lysyl-[glycine-cleavage complex H protein] + glycine + H(+) = N(6)-[(R)-S(8)-aminomethyldihydrolipoyl]-L-lysyl-[glycine-cleavage complex H protein] + CO2. Functionally, the glycine cleavage system catalyzes the degradation of glycine. The P protein binds the alpha-amino group of glycine through its pyridoxal phosphate cofactor; CO(2) is released and the remaining methylamine moiety is then transferred to the lipoamide cofactor of the H protein. The chain is Glycine dehydrogenase (decarboxylating) from Bacteroides thetaiotaomicron (strain ATCC 29148 / DSM 2079 / JCM 5827 / CCUG 10774 / NCTC 10582 / VPI-5482 / E50).